The chain runs to 578 residues: Arginine--tRNA ligase (578 aa).

The 'HIGH' region motif lies at 127–137 (PNLAKEMHVGH).

The protein belongs to the class-I aminoacyl-tRNA synthetase family. Monomer.

The protein resides in the cytoplasm. The enzyme catalyses tRNA(Arg) + L-arginine + ATP = L-arginyl-tRNA(Arg) + AMP + diphosphate. The protein is Arginine--tRNA ligase of Pseudomonas savastanoi pv. phaseolicola (strain 1448A / Race 6) (Pseudomonas syringae pv. phaseolicola (strain 1448A / Race 6)).